A 377-amino-acid polypeptide reads, in one-letter code: 3-dehydroquinate synthase (377 aa).

NAD(+)-binding positions include 113 to 117 (GVIGD), 137 to 138 (TT), Lys-150, and Lys-159. Glu-192, His-254, and His-273 together coordinate Zn(2+).

Belongs to the sugar phosphate cyclases superfamily. Dehydroquinate synthase family. Co(2+) serves as cofactor. The cofactor is Zn(2+). Requires NAD(+) as cofactor.

The protein localises to the cytoplasm. It carries out the reaction 7-phospho-2-dehydro-3-deoxy-D-arabino-heptonate = 3-dehydroquinate + phosphate. The protein operates within metabolic intermediate biosynthesis; chorismate biosynthesis; chorismate from D-erythrose 4-phosphate and phosphoenolpyruvate: step 2/7. Functionally, catalyzes the conversion of 3-deoxy-D-arabino-heptulosonate 7-phosphate (DAHP) to dehydroquinate (DHQ). This chain is 3-dehydroquinate synthase, found in Bartonella tribocorum (strain CIP 105476 / IBS 506).